A 205-amino-acid chain; its full sequence is Small ribosomal subunit protein uS4 (205 aa).

Over residues 1–12 (MSKRVQAKHKLD) the composition is skewed to basic residues. The segment at 1 to 49 (MSKRVQAKHKLDRRMGQNIWGRPKSPVNRREYGPGQHGQRRKGKMSDFG) is disordered. An S4 RNA-binding domain is found at 94–155 (RRLDAVVYRS…ASRQLEIVVV (62 aa)).

This sequence belongs to the universal ribosomal protein uS4 family. In terms of assembly, part of the 30S ribosomal subunit. Contacts protein S5. The interaction surface between S4 and S5 is involved in control of translational fidelity.

Functionally, one of the primary rRNA binding proteins, it binds directly to 16S rRNA where it nucleates assembly of the body of the 30S subunit. Its function is as follows. With S5 and S12 plays an important role in translational accuracy. The polypeptide is Small ribosomal subunit protein uS4 (Methylorubrum extorquens (strain CM4 / NCIMB 13688) (Methylobacterium extorquens)).